Reading from the N-terminus, the 25-residue chain is Galactose-binding lectin-2 (25 aa).

Homodimer. Post-translationally, N-glycosylated.

Functionally, D-galactose specific lectin. Binds in decreasing order of affinity: melibiose, N-acetyllactosamine, D-galacturonic acid, D-galactose, methyl-alpha-D-galactoside, D-galactose, methyl-alpha-D-galactopyranoside, methyl-beta-D-galactopyranoside and lactose. Binds also the glycoproteins globotriose, asialofetuin and mucin. Possesses glycan-dependent cytotoxic activity against Burkitt's lymphoma Raji cells and erythroleukemia K562 cells. Has calcium-independent hemagglutinating activity towards human erythrocytes. The protein is Galactose-binding lectin-2 of Aplysia kurodai (Kuroda's sea hare).